Reading from the N-terminus, the 159-residue chain is 3-hydroxyacyl-[acyl-carrier-protein] dehydratase FabZ (159 aa).

The active site involves His-65.

This sequence belongs to the thioester dehydratase family. FabZ subfamily.

Its subcellular location is the cytoplasm. It carries out the reaction a (3R)-hydroxyacyl-[ACP] = a (2E)-enoyl-[ACP] + H2O. Functionally, involved in unsaturated fatty acids biosynthesis. Catalyzes the dehydration of short chain beta-hydroxyacyl-ACPs and long chain saturated and unsaturated beta-hydroxyacyl-ACPs. The sequence is that of 3-hydroxyacyl-[acyl-carrier-protein] dehydratase FabZ from Microcystis aeruginosa (strain NIES-843 / IAM M-2473).